A 501-amino-acid polypeptide reads, in one-letter code: 4,4'-diapophytoene desaturase (4,4'-diaponeurosporene-forming) (501 aa).

5–17 (VVGAGVTGLAAAA) contacts FAD.

Belongs to the carotenoid/retinoid oxidoreductase family. CrtN subfamily.

The catalysed reaction is 15-cis-4,4'-diapophytoene + 3 FAD + 3 H(+) = all-trans-4,4'-diaponeurosporene + 3 FADH2. It participates in carotenoid biosynthesis; staphyloxanthin biosynthesis; staphyloxanthin from farnesyl diphosphate: step 2/5. In terms of biological role, involved in the biosynthesis of the yellow-orange carotenoid staphyloxanthin, which plays a role in the virulence via its protective function against oxidative stress. Catalyzes three successive dehydrogenation reactions that lead to the introduction of three double bonds into 4,4'-diapophytoene (dehydrosqualene), with 4,4'-diapophytofluene and 4,4'-diapo-zeta-carotene as intermediates, and 4,4'-diaponeurosporene (the major deep-yellow pigment in staphylococci strains) as the end product. In Staphylococcus haemolyticus (strain JCSC1435), this protein is 4,4'-diapophytoene desaturase (4,4'-diaponeurosporene-forming).